The following is a 484-amino-acid chain: Probable chitinase 2 (484 aa).

The signal sequence occupies residues 1–33 (MTLRSRLSGEAPQLWLLLLLASTASSLWASVAA). The GH18 domain maps to 41-432 (KVVVCYVSTW…RTINEATMLA (392 aa)). Residues cysteine 45 and cysteine 70 are joined by a disulfide bond. Chitin is bound by residues 98 to 99 (EE) and 125 to 128 (GGWN). Glutamate 168 acts as the Proton donor in catalysis. Chitin-binding positions include tyrosine 169, 231-234 (MCYD), and tryptophan 384. Phosphoserine is present on serine 467.

This sequence belongs to the glycosyl hydrolase 18 family. Chitinase class II subfamily.

It carries out the reaction Random endo-hydrolysis of N-acetyl-beta-D-glucosaminide (1-&gt;4)-beta-linkages in chitin and chitodextrins.. In Drosophila melanogaster (Fruit fly), this protein is Probable chitinase 2.